The following is a 314-amino-acid chain: Ferredoxin:CoB-CoM heterodisulfide reductase subunit B (314 aa).

The protein belongs to the HdrB family. As to quaternary structure, the ferredoxin:CoB-CoM heterodisulfide reductase is composed of three subunits; HdrA1, HdrB1 and HdrC1. [4Fe-4S] cluster serves as cofactor.

It localises to the cytoplasm. It carries out the reaction coenzyme B + coenzyme M + 2 oxidized [2Fe-2S]-[ferredoxin] = coenzyme M-coenzyme B heterodisulfide + 2 reduced [2Fe-2S]-[ferredoxin] + 2 H(+). It participates in cofactor metabolism; coenzyme M-coenzyme B heterodisulfide reduction; coenzyme B and coenzyme M from coenzyme M-coenzyme B heterodisulfide: step 1/1. Its function is as follows. Part of a complex that catalyzes the reversible reduction of CoM-S-S-CoB to the thiol-coenzymes H-S-CoM (coenzyme M) and H-S-CoB (coenzyme B). Probably involved in methylotrophic methanogenesis but not in aceticlastic methanogenesis. This is Ferredoxin:CoB-CoM heterodisulfide reductase subunit B from Methanosarcina acetivorans (strain ATCC 35395 / DSM 2834 / JCM 12185 / C2A).